The following is a 76-amino-acid chain: Bowman-Birk type proteinase inhibitor DE-4 (76 aa).

Cystine bridges form between Cys15-Cys69, Cys16-Cys31, Cys19-Cys65, Cys21-Cys29, Cys39-Cys46, Cys43-Cys58, and Cys48-Cys56.

The protein belongs to the Bowman-Birk serine protease inhibitor family.

This is Bowman-Birk type proteinase inhibitor DE-4 from Macrotyloma axillare (Perennial horse gram).